We begin with the raw amino-acid sequence, 493 residues long: Cytochrome P450 Tp9025 (493 aa).

Residues 1 to 21 (MALYIIFLLIASSFILFSFIF) form a helical; Signal-anchor for type II membrane protein membrane-spanning segment. Asn209 and Asn411 each carry an N-linked (GlcNAc...) asparagine glycan. Heme is bound at residue Cys433.

Belongs to the cytochrome P450 family. Requires heme as cofactor.

It localises to the membrane. The protein operates within secondary metabolite biosynthesis; terpenoid biosynthesis. Its function is as follows. Probably involved in the biosynthesis of germacrene-derived sesquiterpene lactones. The sequence is that of Cytochrome P450 Tp9025 from Tanacetum parthenium (Feverfew).